A 400-amino-acid chain; its full sequence is NADH-quinone oxidoreductase subunit D (400 aa).

Belongs to the complex I 49 kDa subunit family. In terms of assembly, NDH-1 is composed of 14 different subunits. Subunits NuoB, C, D, E, F, and G constitute the peripheral sector of the complex.

It is found in the cell inner membrane. It catalyses the reaction a quinone + NADH + 5 H(+)(in) = a quinol + NAD(+) + 4 H(+)(out). In terms of biological role, NDH-1 shuttles electrons from NADH, via FMN and iron-sulfur (Fe-S) centers, to quinones in the respiratory chain. The immediate electron acceptor for the enzyme in this species is believed to be a menaquinone. Couples the redox reaction to proton translocation (for every two electrons transferred, four hydrogen ions are translocated across the cytoplasmic membrane), and thus conserves the redox energy in a proton gradient. The sequence is that of NADH-quinone oxidoreductase subunit D from Chlorobaculum parvum (strain DSM 263 / NCIMB 8327) (Chlorobium vibrioforme subsp. thiosulfatophilum).